Reading from the N-terminus, the 122-residue chain is Large ribosomal subunit protein uL14 (122 aa).

This sequence belongs to the universal ribosomal protein uL14 family. Part of the 50S ribosomal subunit. Forms a cluster with proteins L3 and L19. In the 70S ribosome, L14 and L19 interact and together make contacts with the 16S rRNA in bridges B5 and B8.

In terms of biological role, binds to 23S rRNA. Forms part of two intersubunit bridges in the 70S ribosome. This Syntrophobacter fumaroxidans (strain DSM 10017 / MPOB) protein is Large ribosomal subunit protein uL14.